A 663-amino-acid polypeptide reads, in one-letter code: MSKDIQKKVEALREKIEYHNHRYYVLDAPEISDQEFDALMNELIELEQTYPEYQSPDSPSQRVGGEPLDKFPRVSHEIPMLSLENAESQKGLLDFHQRVSKNTQKTDPVYVAELKIDGLALSLRYEQGILVRGATRGDGTTGEDITPNVKTVRSIPLKLSKPLDIEIRGEAFMSKASFERLNQEKAERGEDPFANPRNAAAGSLRQLDPKIPAKRDLDFFPYSVPYIRGENLDSHYSAVKELKDLGFKINPYIRKFETMEEVISYCEEWQEKRTKLPYEIDGVVIKLNDYNLQQQLGATSKNPRWAIAYKFPAEQAESQVNNIFINVGRTGALTPVVELEPVRIAGSTVKRASLHNEDILRQKDVRIGDRVIIQKAGDIIPEVVKVKEEARTGHEQPFVYPESCPVCKSEAKRINDEAILRCINPGCPAQAKERIIHFSSRDAMDIEGLGEKVVEKLYSHGLIKDVADIYYLAKNELSNLEGFGDKSAENLLQAIEESKKNPFNKLLYGLGIRLVGKRAAQLLAFEFEHLDNLMKAQIEDLTKINDIGPRMATSIVSFFQLEHTHNLIRKLKKAGVNMKEPTEQNKSSDPSLTGKLVVITGTFDNYTRRELTDLIEAKGAKVTSNVSSNTDFVLVGANPGSKRDKAQDLGLTIIEESDLEDFL.

Residues 33–37, 82–83, and Glu-113 each bind NAD(+); these read DQEFD and SL. The N6-AMP-lysine intermediate role is filled by Lys-115. Arg-136, Glu-170, Lys-286, and Lys-310 together coordinate NAD(+). Cys-404, Cys-407, Cys-422, and Cys-427 together coordinate Zn(2+). The BRCT domain occupies 587 to 663; it reads SSDPSLTGKL…IEESDLEDFL (77 aa).

This sequence belongs to the NAD-dependent DNA ligase family. LigA subfamily. Mg(2+) is required as a cofactor. It depends on Mn(2+) as a cofactor.

The catalysed reaction is NAD(+) + (deoxyribonucleotide)n-3'-hydroxyl + 5'-phospho-(deoxyribonucleotide)m = (deoxyribonucleotide)n+m + AMP + beta-nicotinamide D-nucleotide.. DNA ligase that catalyzes the formation of phosphodiester linkages between 5'-phosphoryl and 3'-hydroxyl groups in double-stranded DNA using NAD as a coenzyme and as the energy source for the reaction. It is essential for DNA replication and repair of damaged DNA. The protein is DNA ligase of Natranaerobius thermophilus (strain ATCC BAA-1301 / DSM 18059 / JW/NM-WN-LF).